The chain runs to 210 residues: Na(+)-translocating NADH-quinone reductase subunit D (210 aa).

6 helical membrane passes run 11–31 (ILAP…VCSA), 42–62 (FVMT…VSLI), 72–92 (IIVQ…VLKA), 103–123 (VFVG…AFAM), 131–151 (FIDG…VGFF), and 178–198 (NGLM…IWAI).

Belongs to the NqrDE/RnfAE family. In terms of assembly, composed of six subunits; NqrA, NqrB, NqrC, NqrD, NqrE and NqrF.

Its subcellular location is the cell inner membrane. The catalysed reaction is a ubiquinone + n Na(+)(in) + NADH + H(+) = a ubiquinol + n Na(+)(out) + NAD(+). Functionally, NQR complex catalyzes the reduction of ubiquinone-1 to ubiquinol by two successive reactions, coupled with the transport of Na(+) ions from the cytoplasm to the periplasm. NqrA to NqrE are probably involved in the second step, the conversion of ubisemiquinone to ubiquinol. This is Na(+)-translocating NADH-quinone reductase subunit D from Vibrio atlanticus (strain LGP32) (Vibrio splendidus (strain Mel32)).